The sequence spans 87 residues: Envelope glycoprotein N (87 aa).

An N-terminal signal peptide occupies residues 1–24 (MGSITASFILITMQILFFCEDSSG). Residues 25-48 (EPNFAERNFWHASCSARGVYIDGS) lie on the Virion surface side of the membrane. A helical transmembrane segment spans residues 49–69 (MITTLFFYASLLGVCVALISL). The Intravirion portion of the chain corresponds to 70–87 (AYHACFRLFTRSVLRSTW).

This sequence belongs to the herpesviridae glycoprotein N family. Interacts (via N-terminus) with gM (via N-terminus). The gM-gN heterodimer forms the gCII complex.

It is found in the virion membrane. The protein resides in the host membrane. Its subcellular location is the host Golgi apparatus. It localises to the host trans-Golgi network. Its function is as follows. Envelope glycoprotein necessary for proper maturation of gM and modulation of its membrane fusion activity. Also plays a critical role in virion morphogenesis. This is Envelope glycoprotein N from Varicella-zoster virus (strain Dumas) (HHV-3).